We begin with the raw amino-acid sequence, 176 residues long: Crossover junction endodeoxyribonuclease RuvC (176 aa).

Residues Asp7, Glu67, and Asp139 contribute to the active site. Residues Asp7, Glu67, and Asp139 each contribute to the Mg(2+) site.

The protein belongs to the RuvC family. As to quaternary structure, homodimer which binds Holliday junction (HJ) DNA. The HJ becomes 2-fold symmetrical on binding to RuvC with unstacked arms; it has a different conformation from HJ DNA in complex with RuvA. In the full resolvosome a probable DNA-RuvA(4)-RuvB(12)-RuvC(2) complex forms which resolves the HJ. The cofactor is Mg(2+).

The protein localises to the cytoplasm. The enzyme catalyses Endonucleolytic cleavage at a junction such as a reciprocal single-stranded crossover between two homologous DNA duplexes (Holliday junction).. The RuvA-RuvB-RuvC complex processes Holliday junction (HJ) DNA during genetic recombination and DNA repair. Endonuclease that resolves HJ intermediates. Cleaves cruciform DNA by making single-stranded nicks across the HJ at symmetrical positions within the homologous arms, yielding a 5'-phosphate and a 3'-hydroxyl group; requires a central core of homology in the junction. The consensus cleavage sequence is 5'-(A/T)TT(C/G)-3'. Cleavage occurs on the 3'-side of the TT dinucleotide at the point of strand exchange. HJ branch migration catalyzed by RuvA-RuvB allows RuvC to scan DNA until it finds its consensus sequence, where it cleaves and resolves the cruciform DNA. This is Crossover junction endodeoxyribonuclease RuvC from Pelobacter propionicus (strain DSM 2379 / NBRC 103807 / OttBd1).